The sequence spans 492 residues: Spore germination protein GerLA (492 aa).

The next 3 membrane-spanning stretches (helical) occupy residues 295-315 (IIAVLLPAMYVALVSYHQGLI), 384-404 (FLVIIIAVTAIATFSLPVYSI), and 410-430 (ILLFVFVLAATAFGLYGIILA).

The protein belongs to the GerABKA family.

It localises to the membrane. In terms of biological role, contributes to the L-alanine germination response. This is Spore germination protein GerLA (gerLA) from Bacillus cereus.